Reading from the N-terminus, the 555-residue chain is uncharacterized protein (555 aa).

Transmembrane regions (helical) follow at residues Ala13–Leu30, Phe35–Leu57, Leu72–Phe91, Leu98–Thr120, and Thr157–Leu179. RCK C-terminal domains lie at Glu188–Glu273 and Lys282–Asn366. A run of 6 helical transmembrane segments spans residues Leu376–Gly398, Ala408–Tyr430, Leu437–Phe459, Leu469–Phe491, Phe498–Tyr517, and Ala532–Leu554.

It belongs to the AAE transporter (TC 2.A.81) family.

The protein resides in the cell membrane. This is an uncharacterized protein from Bacteroides thetaiotaomicron (strain ATCC 29148 / DSM 2079 / JCM 5827 / CCUG 10774 / NCTC 10582 / VPI-5482 / E50).